The primary structure comprises 949 residues: Glycine dehydrogenase (decarboxylating) (949 aa).

Lys-700 bears the N6-(pyridoxal phosphate)lysine mark.

This sequence belongs to the GcvP family. The glycine cleavage system is composed of four proteins: P, T, L and H. Requires pyridoxal 5'-phosphate as cofactor.

The catalysed reaction is N(6)-[(R)-lipoyl]-L-lysyl-[glycine-cleavage complex H protein] + glycine + H(+) = N(6)-[(R)-S(8)-aminomethyldihydrolipoyl]-L-lysyl-[glycine-cleavage complex H protein] + CO2. Functionally, the glycine cleavage system catalyzes the degradation of glycine. The P protein binds the alpha-amino group of glycine through its pyridoxal phosphate cofactor; CO(2) is released and the remaining methylamine moiety is then transferred to the lipoamide cofactor of the H protein. This is Glycine dehydrogenase (decarboxylating) from Christiangramia forsetii (strain DSM 17595 / CGMCC 1.15422 / KT0803) (Gramella forsetii).